A 686-amino-acid chain; its full sequence is MTDTLLPAAPQPLEKEGNCYFRKGCNPLAQTGRSKLQNQRAALNQQILKAMRMRTGAENLLKAATNQKVREQVRLELSFLNSDLQMLKEELEGLNISVGVYQNTEEAFTIPLIPLGLKETKDVDFSVALKDFILEHYSEDSYLYEDEIADLMDLRQACRTPSRNEAGVELLMSYFMQLGFVESRFFPPTRQMGILFTWYDSLTGVPVSQQNLLLEKASILFNIGALYTQIGTRCNRQTEAGLESTVDAFQRAAGVLNYLKETFTHTPSYDMSPAMLSVLVKMMLAQAQESTFEKVCLPGLQNEFFLLVKVAQEAAKVGEVYRQLHTAMNQEPVKENIPYSWASLACVKAHHYEALAHYFTATLLIDHQLKPGEDEDHQEKCLSQLYSHMPEGLTPLATLKNVHQRQLLGKSHLCQAVTHHEESMREASLCKKLRNIDVLQEVLSAAHDRSQLKYTQLREDDDLLNLTDAPDIVSKTEREVEIIVPQFSKVTVTDFFQKLGPLSVFSANKRWTAPRSIHFTAEEGDLGFTLRGNSPVQVHFLDPYCSAAAAGTKEGDYIVSIQDVDCKWLTLSEVMKMLKSFGQDDIEMKVVSLLDATSTMHSKCATYSVGMQKTYSMICLGIDVDDKTDKTKKVSKKLSFLSWGTNKNRQKSASTLCLPSVGVTMPPVKKKLSSPFSLLNTDSSLY.

In terms of domain architecture, REM-1 spans 26-100; that stretch reads NPLAQTGRSK…LEGLNISVGV (75 aa). The interaction with Rho stretch occupies residues 46–66; it reads QILKAMRMRTGAENLLKAATN. The BRO1 domain maps to 111-460; the sequence is PLIPLGLKET…QLKYTQLRED (350 aa). The 79-residue stretch at 515-593 folds into the PDZ domain; it reads RSIHFTAEEG…DDIEMKVVSL (79 aa). Residue threonine 655 is modified to Phosphothreonine.

The protein belongs to the RHPN family. In terms of assembly, interacts with GTP-bound RhoA and RhoB. Interacts with both GTP- and GDP-bound RhoA. Interacts with KRT18.

The protein localises to the cytoplasm. The protein resides in the perinuclear region. Its function is as follows. Binds specifically to GTP-Rho. May function in a Rho pathway to limit stress fiber formation and/or increase the turnover of F-actin structures in the absence of high levels of RhoA activity. The polypeptide is Rhophilin-2 (RHPN2) (Bos taurus (Bovine)).